The chain runs to 447 residues: Tubulin beta chain (447 aa).

Residues Gln-11, Glu-69, Ser-138, Gly-142, Thr-143, Gly-144, Asn-204, and Asn-226 each contribute to the GTP site. Glu-69 serves as a coordination point for Mg(2+). Positions 427-447 (EAHMDDEEAEEAYEDEAPPEE) are disordered. Over residues 430-447 (MDDEEAEEAYEDEAPPEE) the composition is skewed to acidic residues.

Belongs to the tubulin family. Dimer of alpha and beta chains. A typical microtubule is a hollow water-filled tube with an outer diameter of 25 nm and an inner diameter of 15 nM. Alpha-beta heterodimers associate head-to-tail to form protofilaments running lengthwise along the microtubule wall with the beta-tubulin subunit facing the microtubule plus end conferring a structural polarity. Microtubules usually have 13 protofilaments but different protofilament numbers can be found in some organisms and specialized cells. Mg(2+) serves as cofactor.

The protein localises to the cytoplasm. Its subcellular location is the cytoskeleton. Tubulin is the major constituent of microtubules, a cylinder consisting of laterally associated linear protofilaments composed of alpha- and beta-tubulin heterodimers. Microtubules grow by the addition of GTP-tubulin dimers to the microtubule end, where a stabilizing cap forms. Below the cap, tubulin dimers are in GDP-bound state, owing to GTPase activity of alpha-tubulin. This Uromyces fabae (Rust fungus) protein is Tubulin beta chain (TBB1).